A 1450-amino-acid chain; its full sequence is DNA-directed RNA polymerase RPB1 homolog (1450 aa).

The protein belongs to the RNA polymerase beta' chain family. As to quaternary structure, part of the viral DNA-directed RNA polymerase that consists of 8 polII-like subunits (RPB1, RPB2, RPB3, RPB5, RPB6, RPB7, RPB9, RPB10), a capping enzyme and a termination factor.

It is found in the virion. It carries out the reaction RNA(n) + a ribonucleoside 5'-triphosphate = RNA(n+1) + diphosphate. Functionally, catalytic component of the DNA-directed RNA polymerase (RNAP) that catalyzes the transcription in the cytoplasm of viral DNA into RNA using the four ribonucleoside triphosphates as substrates. Forms the polymerase active center together with RPB2. Part of the core element with the central large cleft, the clamp element that moves to open and close the cleft and the jaws that are thought to grab the incoming DNA template. The chain is DNA-directed RNA polymerase RPB1 homolog from Ornithodoros (relapsing fever ticks).